A 119-amino-acid polypeptide reads, in one-letter code: Beta-2-microglobulin (119 aa).

Positions 1–20 (MARSVTVIFLVLVSLAVVLA) are cleaved as a signal peptide. One can recognise an Ig-like C1-type domain in the interval 25–114 (PQIQVYSRHP…VTLKEPKTVT (90 aa)). Cysteine 45 and cysteine 100 are oxidised to a cystine.

The protein belongs to the beta-2-microglobulin family. Heterodimer of an alpha chain and a beta chain. Beta-2-microglobulin is the beta-chain of major histocompatibility complex class I molecules. Forms a heterotrimer with MR1 and a metabolite antigen.

The protein localises to the secreted. Component of the class I major histocompatibility complex (MHC). Involved in the presentation of peptide antigens to the immune system. The protein is Beta-2-microglobulin (B2m) of Rattus norvegicus (Rat).